The following is a 208-amino-acid chain: Uridine kinase (208 aa).

Position 12–19 (12–19) interacts with ATP; the sequence is GGSGGGKT.

Belongs to the uridine kinase family.

The protein localises to the cytoplasm. It catalyses the reaction uridine + ATP = UMP + ADP + H(+). The enzyme catalyses cytidine + ATP = CMP + ADP + H(+). The protein operates within pyrimidine metabolism; CTP biosynthesis via salvage pathway; CTP from cytidine: step 1/3. It functions in the pathway pyrimidine metabolism; UMP biosynthesis via salvage pathway; UMP from uridine: step 1/1. In Streptococcus pyogenes serotype M18 (strain MGAS8232), this protein is Uridine kinase.